The primary structure comprises 608 residues: Lysophospholipase 2 (608 aa).

The first 17 residues, 1–17 (MLVWQSILLFLVGCVLS), serve as a signal peptide directing secretion. Residues 30–564 (QCPEGKLTRS…ENYCWDGTIY (535 aa)) form the PLA2c domain. N-linked (GlcNAc...) asparagine glycans are attached at residues Asn-259, Asn-365, Asn-450, Asn-464, Asn-491, and Asn-572.

It belongs to the lysophospholipase family.

The protein resides in the secreted. The catalysed reaction is a 1-acyl-sn-glycero-3-phosphocholine + H2O = sn-glycerol 3-phosphocholine + a fatty acid + H(+). Its function is as follows. Catalyzes the release of fatty acids from lysophospholipids. Phospholipase B may well contribute to pathogenicity by abetting the fungus in damaging and traversing host cell membranes, processes which likely increase the rapidity of disseminated infection. The chain is Lysophospholipase 2 (PLB2) from Candida albicans (Yeast).